Here is a 410-residue protein sequence, read N- to C-terminus: Chorismate synthase (410 aa).

The NADP(+) site is built by R40 and R46. Residues 129 to 131 (RSS), 257 to 258 (QA), G302, 317 to 321 (KPISS), and R343 contribute to the FMN site.

It belongs to the chorismate synthase family. Homotetramer. It depends on FMNH2 as a cofactor.

It carries out the reaction 5-O-(1-carboxyvinyl)-3-phosphoshikimate = chorismate + phosphate. It participates in metabolic intermediate biosynthesis; chorismate biosynthesis; chorismate from D-erythrose 4-phosphate and phosphoenolpyruvate: step 7/7. In terms of biological role, catalyzes the anti-1,4-elimination of the C-3 phosphate and the C-6 proR hydrogen from 5-enolpyruvylshikimate-3-phosphate (EPSP) to yield chorismate, which is the branch point compound that serves as the starting substrate for the three terminal pathways of aromatic amino acid biosynthesis. This reaction introduces a second double bond into the aromatic ring system. In Chlorobaculum parvum (strain DSM 263 / NCIMB 8327) (Chlorobium vibrioforme subsp. thiosulfatophilum), this protein is Chorismate synthase.